A 507-amino-acid chain; its full sequence is Keratin, type II cuticular Hb5 (507 aa).

The segment at 1–123 (MSCRSYRISP…PNAQCVKYEE (123 aa)) is head. Positions 123–434 (EKEQIKCLNS…RLLEGEEQRL (312 aa)) constitute an IF rod domain. The tract at residues 124–158 (KEQIKCLNSKFAAFIDKVRFLEQQNKLLETKWQFY) is coil 1A. Residues 159–168 (QNRKCCESNL) are linker 1. The coil 1B stretch occupies residues 169 to 269 (EPLFGGYIEA…YEEEVCVLQA (101 aa)). A Glycyl lysine isopeptide (Lys-Gly) (interchain with G-Cter in SUMO1) cross-link involves residue Lys229. A linker 12 region spans residues 270 to 286 (HISDTSVIVKMDNSRDL). Residues 287 to 430 (NMDCVVAEIK…ATYRRLLEGE (144 aa)) are coil 2. Residues 431–507 (EQRLCEGVGS…CGSSRSVRFA (77 aa)) form a tail region.

Belongs to the intermediate filament family. As to quaternary structure, heterotetramer of two type I and two type II keratins.

The protein is Keratin, type II cuticular Hb5 (Krt85) of Mus musculus (Mouse).